Here is a 255-residue protein sequence, read N- to C-terminus: tRNA (guanine-N(1)-)-methyltransferase (255 aa).

Residues Gly113 and 133 to 138 (IGDYVL) each bind S-adenosyl-L-methionine.

This sequence belongs to the RNA methyltransferase TrmD family. As to quaternary structure, homodimer.

The protein resides in the cytoplasm. It catalyses the reaction guanosine(37) in tRNA + S-adenosyl-L-methionine = N(1)-methylguanosine(37) in tRNA + S-adenosyl-L-homocysteine + H(+). In terms of biological role, specifically methylates guanosine-37 in various tRNAs. This Serratia proteamaculans (strain 568) protein is tRNA (guanine-N(1)-)-methyltransferase.